The primary structure comprises 244 residues: Transcriptional activator protein anr (244 aa).

21 to 149 (APLCLPLSLT…RLMSREIRDD (129 aa)) provides a ligand contact to a nucleoside 3',5'-cyclic phosphate. An HTH crp-type domain is found at 159–232 (KTADERIATF…GKEVHILDSI (74 aa)). A DNA-binding region (H-T-H motif) is located at residues 192-211 (RNEIGNYLGLAVETVSRVFT).

Its function is as follows. Transcriptional activator of anaerobic gene expression. The polypeptide is Transcriptional activator protein anr (anr) (Pseudomonas aeruginosa (strain ATCC 15692 / DSM 22644 / CIP 104116 / JCM 14847 / LMG 12228 / 1C / PRS 101 / PAO1)).